The primary structure comprises 1517 residues: DNA-directed RNA polymerase subunit beta' (1517 aa).

Cysteine 71, cysteine 73, cysteine 86, and cysteine 89 together coordinate Zn(2+). Positions 482, 484, and 486 each coordinate Mg(2+). Zn(2+) contacts are provided by cysteine 812, cysteine 886, cysteine 893, and cysteine 896.

The protein belongs to the RNA polymerase beta' chain family. As to quaternary structure, the RNAP catalytic core consists of 2 alpha, 1 beta, 1 beta' and 1 omega subunit. When a sigma factor is associated with the core the holoenzyme is formed, which can initiate transcription. Mg(2+) is required as a cofactor. It depends on Zn(2+) as a cofactor.

The catalysed reaction is RNA(n) + a ribonucleoside 5'-triphosphate = RNA(n+1) + diphosphate. DNA-dependent RNA polymerase catalyzes the transcription of DNA into RNA using the four ribonucleoside triphosphates as substrates. The sequence is that of DNA-directed RNA polymerase subunit beta' from Campylobacter lari (strain RM2100 / D67 / ATCC BAA-1060).